The following is a 123-amino-acid chain: Large ribosomal subunit protein bL12 (123 aa).

Position 84 is an N6-methyllysine (K84). Residues 94–123 (PATLKEGMSKEDGDEAKTKLEEAGASVELK) form a disordered region. Positions 100–115 (GMSKEDGDEAKTKLEE) are enriched in basic and acidic residues.

Belongs to the bacterial ribosomal protein bL12 family. In terms of assembly, homodimer. Part of the ribosomal stalk of the 50S ribosomal subunit. Forms a multimeric L10(L12)X complex, where L10 forms an elongated spine to which 2 to 4 L12 dimers bind in a sequential fashion. Binds GTP-bound translation factors.

Functionally, seems to be the binding site for several of the factors involved in protein synthesis and appears to be essential for accurate translation. Forms part of the ribosomal stalk which helps the ribosome interact with GTP-bound translation factors. Is thus essential for accurate translation. The protein is Large ribosomal subunit protein bL12 of Halophilic eubacterium NRCC 41227.